A 325-amino-acid chain; its full sequence is Acetyl-coenzyme A carboxylase carboxyl transferase subunit alpha (325 aa).

The CoA carboxyltransferase C-terminal domain maps to 38–292; sequence KLEKRLHALE…DQVLEKSLKQ (255 aa).

It belongs to the AccA family. In terms of assembly, acetyl-CoA carboxylase is a heterohexamer composed of biotin carboxyl carrier protein (AccB), biotin carboxylase (AccC) and two subunits each of ACCase subunit alpha (AccA) and ACCase subunit beta (AccD).

The protein localises to the cytoplasm. It catalyses the reaction N(6)-carboxybiotinyl-L-lysyl-[protein] + acetyl-CoA = N(6)-biotinyl-L-lysyl-[protein] + malonyl-CoA. Its pathway is lipid metabolism; malonyl-CoA biosynthesis; malonyl-CoA from acetyl-CoA: step 1/1. Functionally, component of the acetyl coenzyme A carboxylase (ACC) complex. First, biotin carboxylase catalyzes the carboxylation of biotin on its carrier protein (BCCP) and then the CO(2) group is transferred by the carboxyltransferase to acetyl-CoA to form malonyl-CoA. In Halalkalibacterium halodurans (strain ATCC BAA-125 / DSM 18197 / FERM 7344 / JCM 9153 / C-125) (Bacillus halodurans), this protein is Acetyl-coenzyme A carboxylase carboxyl transferase subunit alpha.